The primary structure comprises 314 residues: Acetaldehyde dehydrogenase 1 (314 aa).

NAD(+) is bound at residue 15–18 (SGNI). The active-site Acyl-thioester intermediate is C133. NAD(+) is bound by residues 164-172 (SAGPGTRAN) and N291.

Belongs to the acetaldehyde dehydrogenase family.

The catalysed reaction is acetaldehyde + NAD(+) + CoA = acetyl-CoA + NADH + H(+). The polypeptide is Acetaldehyde dehydrogenase 1 (Paraburkholderia xenovorans (strain LB400)).